Here is a 150-residue protein sequence, read N- to C-terminus: MKPSCYDNVGKAVKRKCETTIAQKRDISLMDTGANTYLIRPNYKDKFKAGVAKECIGEILREQLYGVQYDPEEVPTLSRSLADSIKHKLKDMAFDRYKFIVQVVIGEQRGEGVKMAARCFWDADTDNYAQEIYMNDSLFCVAAAFAVYYY.

Belongs to the dynein light chain Tctex-type family.

Its subcellular location is the dynein axonemal particle. Its function is as follows. Acts as one of several non-catalytic accessory components of the cytoplasmic dynein 2 complex (dynein-2 complex), a motor protein complex that drives the movement of cargos along microtubules within cilia and flagella in concert with the intraflagellar transport (IFT) system. Required for proper retrograde ciliary transport. The polypeptide is Dynein light chain Tctex-type protein 2B (dynlt2b) (Danio rerio (Zebrafish)).